The following is a 176-amino-acid chain: MDLPGPIHDFLLVFLGSGLLVGGLGVVLLPNPIFSAFSLGFVLVCISLLYILSNSHFVAAAQLLIYVGAINVLIIFAVMFMNDSEYSTDSNLWTVGNGITSLVCTTILFSLMSTILDTSWYGVIWTTRLNQILEQDLISNSQQIGIHLSTDFFLPFELISIILLVALIGAISVARQ.

Helical transmembrane passes span 10 to 30 (FLLV…VLLP), 32 to 52 (PIFS…LYIL), 61 to 81 (AQLL…VMFM), 92 to 112 (LWTV…FSLM), and 152 to 172 (FFLP…GAIS).

The protein belongs to the complex I subunit 6 family. In terms of assembly, NDH is composed of at least 16 different subunits, 5 of which are encoded in the nucleus.

Its subcellular location is the plastid. It localises to the chloroplast thylakoid membrane. The catalysed reaction is a plastoquinone + NADH + (n+1) H(+)(in) = a plastoquinol + NAD(+) + n H(+)(out). It carries out the reaction a plastoquinone + NADPH + (n+1) H(+)(in) = a plastoquinol + NADP(+) + n H(+)(out). Its function is as follows. NDH shuttles electrons from NAD(P)H:plastoquinone, via FMN and iron-sulfur (Fe-S) centers, to quinones in the photosynthetic chain and possibly in a chloroplast respiratory chain. The immediate electron acceptor for the enzyme in this species is believed to be plastoquinone. Couples the redox reaction to proton translocation, and thus conserves the redox energy in a proton gradient. The sequence is that of NAD(P)H-quinone oxidoreductase subunit 6, chloroplastic (ndhG) from Nasturtium officinale (Watercress).